A 152-amino-acid polypeptide reads, in one-letter code: Protein-export protein SecB (152 aa).

The protein belongs to the SecB family. Homotetramer, a dimer of dimers. One homotetramer interacts with 1 SecA dimer.

It is found in the cytoplasm. Functionally, one of the proteins required for the normal export of preproteins out of the cell cytoplasm. It is a molecular chaperone that binds to a subset of precursor proteins, maintaining them in a translocation-competent state. It also specifically binds to its receptor SecA. In Rickettsia africae (strain ESF-5), this protein is Protein-export protein SecB.